The chain runs to 256 residues: Putative bidirectional sugar transporter SWEET7e (256 aa).

The Extracellular segment spans residues 1–9 (MVSPDLIRN). A helical transmembrane segment spans residues 10–30 (VVGIVGNAISFGLFLSPVLTF). The MtN3/slv 1 domain maps to 10-97 (VVGIVGNAIS…TIFFLFSNKK (88 aa)). Residues 31-45 (WRIIKEKDMKYFKAD) lie on the Cytoplasmic side of the membrane. Residues 46-66 (PYLATLLNCMLWVFYGLPIVH) traverse the membrane as a helical segment. Topologically, residues 67–69 (PNS) are extracellular. The chain crosses the membrane as a helical span at residues 70-90 (ILVVTINGIGLVIEAVYLTIF). Topologically, residues 91–100 (FLFSNKKNKK) are cytoplasmic. A helical transmembrane segment spans residues 101-121 (MGVVLATEALFMAAVALGVLL). Over 122–130 (GAHTHQRRS) the chain is Extracellular. The helical transmembrane segment at 131-151 (LIVGILCVIFGTIMYSSPLTI) threads the bilayer. The 80-residue stretch at 133–212 (VGILCVIFGT…LMQLILDKNQ (80 aa)) folds into the MtN3/slv 2 domain. Residues 152 to 164 (MSQVVKTKSVEYM) are Cytoplasmic-facing. A helical membrane pass occupies residues 165–185 (PLLLSVVSFLNGLCWTSYALI). R186 is a topological domain (extracellular). A helical transmembrane segment spans residues 187-207 (FDIFITIPNGLGVLFTLMQLI). Residues 208–256 (LDKNQDKNLELPTVAPVAKETSIVTPVSKDDDINGSTASHVIINITKEP) are Cytoplasmic-facing.

The protein belongs to the SWEET sugar transporter family. In terms of assembly, forms homooligomers and/or heterooligomers.

Its subcellular location is the cell membrane. Its function is as follows. Mediates both low-affinity uptake and efflux of sugar across the plasma membrane. This is Putative bidirectional sugar transporter SWEET7e (SWEET7E) from Oryza sativa subsp. japonica (Rice).